A 121-amino-acid polypeptide reads, in one-letter code: uncharacterized protein (121 aa).

2 disordered regions span residues 1–41 (MRRQ…QESR) and 94–121 (GGTI…GLRR). Positions 98–108 (SGQQSRNSSLP) are enriched in polar residues.

Predominantly expressed in tissues containing motile cilia. Also expressed in non-motile ciliated adult olfactory bulbs.

It is found in the cytoplasm. The protein localises to the cytoskeleton. It localises to the cilium basal body. This is an uncharacterized protein from Mus musculus (Mouse).